The following is a 24-amino-acid chain: Skin secreted peptide 1 (24 aa).

In terms of tissue distribution, expressed by the skin glands.

Its subcellular location is the secreted. The polypeptide is Skin secreted peptide 1 (Ascaphus truei (Coastal tailed frog)).